We begin with the raw amino-acid sequence, 126 residues long: Glycine cleavage system H protein (126 aa).

The region spanning 22–104 (KAYIGITSFA…YEQAWMIVVE (83 aa)) is the Lipoyl-binding domain. Position 63 is an N6-lipoyllysine (K63).

This sequence belongs to the GcvH family. As to quaternary structure, the glycine cleavage system is composed of four proteins: P, T, L and H. It depends on (R)-lipoate as a cofactor.

Its function is as follows. The glycine cleavage system catalyzes the degradation of glycine. The H protein shuttles the methylamine group of glycine from the P protein to the T protein. Functionally, is also involved in protein lipoylation via its role as an octanoyl/lipoyl carrier protein intermediate. In Brevibacillus brevis (strain 47 / JCM 6285 / NBRC 100599), this protein is Glycine cleavage system H protein.